The primary structure comprises 198 residues: Recombination protein RecR (198 aa).

The C4-type zinc finger occupies C57–C72. Positions S80–P175 constitute a Toprim domain.

Belongs to the RecR family.

In terms of biological role, may play a role in DNA repair. It seems to be involved in an RecBC-independent recombinational process of DNA repair. It may act with RecF and RecO. The sequence is that of Recombination protein RecR from Symbiobacterium thermophilum (strain DSM 24528 / JCM 14929 / IAM 14863 / T).